The primary structure comprises 279 residues: NADPH-dependent 7-cyano-7-deazaguanine reductase (279 aa).

86–88 (IES) provides a ligand contact to substrate. NADPH is bound at residue 88-89 (SK). Cysteine 187 serves as the catalytic Thioimide intermediate. Aspartate 194 serves as the catalytic Proton donor. 226–227 (HE) serves as a coordination point for substrate. Residue 255–256 (RG) coordinates NADPH.

This sequence belongs to the GTP cyclohydrolase I family. QueF type 2 subfamily. Homodimer.

It localises to the cytoplasm. It catalyses the reaction 7-aminomethyl-7-carbaguanine + 2 NADP(+) = 7-cyano-7-deazaguanine + 2 NADPH + 3 H(+). It participates in tRNA modification; tRNA-queuosine biosynthesis. Functionally, catalyzes the NADPH-dependent reduction of 7-cyano-7-deazaguanine (preQ0) to 7-aminomethyl-7-deazaguanine (preQ1). This Haemophilus influenzae (strain ATCC 51907 / DSM 11121 / KW20 / Rd) protein is NADPH-dependent 7-cyano-7-deazaguanine reductase.